A 441-amino-acid polypeptide reads, in one-letter code: Tubulin beta-1 chain (441 aa).

Residues Gln11, Glu69, Ser138, Gly142, Thr143, Gly144, Asn204, and Asn226 each contribute to the GTP site. Residue Glu69 coordinates Mg(2+).

This sequence belongs to the tubulin family. In terms of assembly, dimer of alpha and beta chains. A typical microtubule is a hollow water-filled tube with an outer diameter of 25 nm and an inner diameter of 15 nM. Alpha-beta heterodimers associate head-to-tail to form protofilaments running lengthwise along the microtubule wall with the beta-tubulin subunit facing the microtubule plus end conferring a structural polarity. Microtubules usually have 13 protofilaments but different protofilament numbers can be found in some organisms and specialized cells. It depends on Mg(2+) as a cofactor. Expressed primarily in touch receptor neurons.

It is found in the cytoplasm. Its subcellular location is the cytoskeleton. In terms of biological role, TTubulin is the major constituent of microtubules, a cylinder consisting of laterally associated linear protofilaments composed of alpha- and beta-tubulin heterodimers. Microtubules grow by the addition of GTP-tubulin dimers to the microtubule end, where a stabilizing cap forms. Below the cap, tubulin dimers are in GDP-bound state, owing to GTPase activity of alpha-tubulin. Plays a role in mechanosensory transduction (touch sensitivity). Its function is as follows. Mec-7 beta-tubulin is required for the production of 15-protofilament microtubules. In Caenorhabditis elegans, this protein is Tubulin beta-1 chain (mec-7).